We begin with the raw amino-acid sequence, 180 residues long: Ribulose bisphosphate carboxylase small subunit, chloroplastic 5 (180 aa).

A chloroplast-targeting transit peptide spans 1–56 (MASSVMSSAAVATRGNGAQASMVAPFTGLKSTASFPVSRKQNLDITSIASNGGRVR).

It belongs to the RuBisCO small chain family. In terms of assembly, heterohexadecamer of 8 large and 8 small subunits.

The protein localises to the plastid. Its subcellular location is the chloroplast. Functionally, ruBisCO catalyzes two reactions: the carboxylation of D-ribulose 1,5-bisphosphate, the primary event in carbon dioxide fixation, as well as the oxidative fragmentation of the pentose substrate. Both reactions occur simultaneously and in competition at the same active site. Although the small subunit is not catalytic it is essential for maximal activity. The polypeptide is Ribulose bisphosphate carboxylase small subunit, chloroplastic 5 (Solanum tuberosum (Potato)).